The sequence spans 245 residues: 1-(5-phosphoribosyl)-5-[(5-phosphoribosylamino)methylideneamino] imidazole-4-carboxamide isomerase (245 aa).

The active-site Proton acceptor is Asp-7. Asp-129 functions as the Proton donor in the catalytic mechanism.

This sequence belongs to the HisA/HisF family.

It localises to the cytoplasm. The catalysed reaction is 1-(5-phospho-beta-D-ribosyl)-5-[(5-phospho-beta-D-ribosylamino)methylideneamino]imidazole-4-carboxamide = 5-[(5-phospho-1-deoxy-D-ribulos-1-ylimino)methylamino]-1-(5-phospho-beta-D-ribosyl)imidazole-4-carboxamide. Its pathway is amino-acid biosynthesis; L-histidine biosynthesis; L-histidine from 5-phospho-alpha-D-ribose 1-diphosphate: step 4/9. The sequence is that of 1-(5-phosphoribosyl)-5-[(5-phosphoribosylamino)methylideneamino] imidazole-4-carboxamide isomerase from Escherichia coli O6:K15:H31 (strain 536 / UPEC).